Here is a 526-residue protein sequence, read N- to C-terminus: Phosphoenolpyruvate carboxykinase (ATP) (526 aa).

Positions 55, 190, and 196 each coordinate substrate. ATP contacts are provided by residues Lys196, His215, and Gly231 to Thr239. Lys196 and His215 together coordinate Mn(2+). Residue Asp252 coordinates Mn(2+). Glu280, Arg317, and Thr442 together coordinate ATP. Residue Arg317 coordinates substrate.

The protein belongs to the phosphoenolpyruvate carboxykinase (ATP) family. The cofactor is Mn(2+).

Its subcellular location is the cytoplasm. The enzyme catalyses oxaloacetate + ATP = phosphoenolpyruvate + ADP + CO2. The protein operates within carbohydrate biosynthesis; gluconeogenesis. Involved in the gluconeogenesis. Catalyzes the conversion of oxaloacetate (OAA) to phosphoenolpyruvate (PEP) through direct phosphoryl transfer between the nucleoside triphosphate and OAA. The sequence is that of Phosphoenolpyruvate carboxykinase (ATP) from Alkaliphilus oremlandii (strain OhILAs) (Clostridium oremlandii (strain OhILAs)).